The primary structure comprises 844 residues: SWI/SNF-related matrix-associated actin-dependent regulator of chromatin subfamily A containing DEAD/H box 1 homolog (844 aa).

Over residues M1 to S23 the composition is skewed to low complexity. Disordered regions lie at residues M1 to E75 and N121 to M180. A compositionally biased stretch (polar residues) spans I30 to S42. Residues T301 to K471 form the Helicase ATP-binding domain. D314–T321 contributes to the ATP binding site. The short motif at D422 to H425 is the DEGH box element. Positions Y656–T818 constitute a Helicase C-terminal domain. S834, S838, and S841 each carry phosphoserine.

The protein belongs to the SNF2/RAD54 helicase family.

The protein localises to the nucleus. It carries out the reaction ATP + H2O = ADP + phosphate + H(+). Functionally, DNA helicase that possesses intrinsic ATP-dependent nucleosome-remodeling activity and is both required for DNA repair and heterochromatin organization. Promotes DNA end resection of double-strand breaks (DSBs) following DNA damage: probably acts by weakening histone DNA interactions in nucleosomes flanking DSBs. This is SWI/SNF-related matrix-associated actin-dependent regulator of chromatin subfamily A containing DEAD/H box 1 homolog (Etl1) from Drosophila melanogaster (Fruit fly).